A 245-amino-acid chain; its full sequence is MGPAFASAALALSEALNLPSSGEADFVLQVGTEGLQLQELGPHAPGPLSVDFVRGPLAHRRLQGGGSGQMIAKAVGIQPGVRPDVLDATAGLGRDAFVLAQLGCNVRLIERHPVIAALLADGLQRARLDPDVRPIIERMHLQTGDAIQLMNAWEGDPPQVIYVDPMFPHREKSSLVKKEMSMLRPLVGDDLDASSLLEAALKLATHRVVVKRPRKAPSVLGPKVGYVLEGKSSRFDIYPKRSLKP.

S-adenosyl-L-methionine is bound by residues 94-95 (RD), 110-111 (ER), and Asp-164.

This sequence belongs to the methyltransferase superfamily. RsmJ family.

Its subcellular location is the cytoplasm. The catalysed reaction is guanosine(1516) in 16S rRNA + S-adenosyl-L-methionine = N(2)-methylguanosine(1516) in 16S rRNA + S-adenosyl-L-homocysteine + H(+). In terms of biological role, specifically methylates the guanosine in position 1516 of 16S rRNA. The protein is Ribosomal RNA small subunit methyltransferase J of Dechloromonas aromatica (strain RCB).